The sequence spans 153 residues: Aspartate carbamoyltransferase regulatory chain (153 aa).

Cysteine 109, cysteine 114, cysteine 138, and cysteine 141 together coordinate Zn(2+).

This sequence belongs to the PyrI family. As to quaternary structure, contains catalytic and regulatory chains. Zn(2+) serves as cofactor.

Its function is as follows. Involved in allosteric regulation of aspartate carbamoyltransferase. The sequence is that of Aspartate carbamoyltransferase regulatory chain from Shigella dysenteriae serotype 1 (strain Sd197).